Consider the following 393-residue polypeptide: MTAPTTRKDLMIVNMGPQHPSMHGVLRLIVTLDGEDVVDCEPILGYLHRGMEKIAENRTIIQYLPYVTRWDYLATMFTEAITINGPEQLGNIQVPKRASYIRVIMLELSRIASHLLWLGPFMADIGAQTPFFYIFRERELIYDLFEAATGMRMMHNFFRIGGVAADLPYGWINKCLDFCDYFLTGVAEYQKLITRNPLFLERVEGVGIIGGDEALNWGLSGPMLRASGIEWDLRKVDHYESYDEFDWQVQWQREGDSLARYLVRISEMTESIKIIQQALEGIPGGPYENLEIRRFDRLKDPEWNAFEYRFISKKPSPTFELSKQELYVRVEAPKGELGIFLIGDQSVFPWRWKIRPPGFINLQILPQLVKRMKLADIMTILGSIDIIMGEVDR.

It belongs to the complex I 49 kDa subunit family. In terms of assembly, NDH is composed of at least 16 different subunits, 5 of which are encoded in the nucleus.

The protein localises to the plastid. The protein resides in the chloroplast thylakoid membrane. It carries out the reaction a plastoquinone + NADH + (n+1) H(+)(in) = a plastoquinol + NAD(+) + n H(+)(out). The catalysed reaction is a plastoquinone + NADPH + (n+1) H(+)(in) = a plastoquinol + NADP(+) + n H(+)(out). Its function is as follows. NDH shuttles electrons from NAD(P)H:plastoquinone, via FMN and iron-sulfur (Fe-S) centers, to quinones in the photosynthetic chain and possibly in a chloroplast respiratory chain. The immediate electron acceptor for the enzyme in this species is believed to be plastoquinone. Couples the redox reaction to proton translocation, and thus conserves the redox energy in a proton gradient. The polypeptide is NAD(P)H-quinone oxidoreductase subunit H, chloroplastic (Nicotiana tomentosiformis (Tobacco)).